We begin with the raw amino-acid sequence, 922 residues long: Isoleucine--tRNA ligase (922 aa).

The short motif at 57–67 (PYANGDIHLGH) is the 'HIGH' region element. Glu553 is a binding site for L-isoleucyl-5'-AMP. The 'KMSKS' region signature appears at 594-598 (KMSKS). Lys597 contacts ATP. The Zn(2+) site is built by Cys892, Cys895, Cys912, and Cys915.

This sequence belongs to the class-I aminoacyl-tRNA synthetase family. IleS type 1 subfamily. As to quaternary structure, monomer. Zn(2+) serves as cofactor.

It is found in the cytoplasm. It carries out the reaction tRNA(Ile) + L-isoleucine + ATP = L-isoleucyl-tRNA(Ile) + AMP + diphosphate. In terms of biological role, catalyzes the attachment of isoleucine to tRNA(Ile). As IleRS can inadvertently accommodate and process structurally similar amino acids such as valine, to avoid such errors it has two additional distinct tRNA(Ile)-dependent editing activities. One activity is designated as 'pretransfer' editing and involves the hydrolysis of activated Val-AMP. The other activity is designated 'posttransfer' editing and involves deacylation of mischarged Val-tRNA(Ile). The sequence is that of Isoleucine--tRNA ligase from Desulfitobacterium hafniense (strain Y51).